The primary structure comprises 555 residues: GMP synthase [glutamine-hydrolyzing] (555 aa).

The 227-residue stretch at Lys8–Gln234 folds into the Glutamine amidotransferase type-1 domain. Cys89 (nucleophile; for GATase activity) is an active-site residue. The L-glutamine site is built by Gln93, Asn169, Asp172, and His208. Residues His208 and Glu210 each act as for GATase activity in the active site. Residues Phe235–Arg430 form the GMPS ATP-PPase domain. Position 262-268 (Ser262–Thr268) interacts with ATP. XMP contacts are provided by Arg336, Gln476, Lys547, Ile552, and Glu553.

Homodimer (via the GMPS ATP-PPase domain). Mg(2+) serves as cofactor.

The enzyme catalyses XMP + L-glutamine + ATP + H2O = GMP + L-glutamate + AMP + diphosphate + 2 H(+). It participates in purine metabolism; GMP biosynthesis; GMP from XMP (L-Gln route): step 1/1. Its activity is regulated as follows. The GATase domain is allosterically activated by the binding of substrates, ATP and XMP, to the ATPPase domain, thus ensuring that glutamine hydrolysis occurs only when the ATPPase domain is primed to receive ammonia. Inhibited by Na(+). Inhibited by the reaction product GMP. In terms of biological role, catalyzes the conversion of xanthine monophosphate (XMP) to GMP in the presence of glutamine and ATP through an adenyl-XMP intermediate, which is the final step of de novo synthesis of GMP. The conversion of XMP to GMP involves the coordinated action of the glutamine amidotransferase (GATase) domain that catalyzes the hydrolysis of the amide side chain of glutamine producing ammonia and the ATP pyrophosphatase (ATPPase) domain that catalyzes the synthesis of adenyl-XMP intermediate from ATP. The ammonia produced by the GATase domain is tunnelled to the ATP-PPase domain where it attacks the adenyl-XMP intermediate generating GMP. The polypeptide is GMP synthase [glutamine-hydrolyzing] (Plasmodium falciparum (isolate 3D7)).